We begin with the raw amino-acid sequence, 418 residues long: 26S proteasome regulatory subunit 6B (418 aa).

Methionine 1 is modified (N-acetylmethionine). Serine 21 carries the post-translational modification Phosphoserine. At threonine 25 the chain carries Phosphothreonine. Serine 28 bears the Phosphoserine mark. 206–213 (GPPGCGKT) serves as a coordination point for ATP. 2 positions are modified to N6-acetyllysine: lysine 397 and lysine 401.

The protein belongs to the AAA ATPase family. As to quaternary structure, component of the 19S proteasome regulatory particle complex. The 26S proteasome consists of a 20S core particle (CP) and two 19S regulatory subunits (RP). The regulatory particle is made of a lid composed of 9 subunits, a base containing 6 ATPases including PSMC4 and few additional components. Interacts with NR1I3. Interacts with PAAF1. Interacts with TRIM5. Interacts with ZFAND1.

It localises to the cytoplasm. Its subcellular location is the nucleus. Functionally, component of the 26S proteasome, a multiprotein complex involved in the ATP-dependent degradation of ubiquitinated proteins. This complex plays a key role in the maintenance of protein homeostasis by removing misfolded or damaged proteins, which could impair cellular functions, and by removing proteins whose functions are no longer required. Therefore, the proteasome participates in numerous cellular processes, including cell cycle progression, apoptosis, or DNA damage repair. PSMC4 belongs to the heterohexameric ring of AAA (ATPases associated with diverse cellular activities) proteins that unfolds ubiquitinated target proteins that are concurrently translocated into a proteolytic chamber and degraded into peptides. The protein is 26S proteasome regulatory subunit 6B (PSMC4) of Bos taurus (Bovine).